Consider the following 314-residue polypeptide: Homoserine kinase (314 aa).

97-107 (PPARGMGSSAT) provides a ligand contact to ATP.

The protein belongs to the GHMP kinase family. Homoserine kinase subfamily.

It localises to the cytoplasm. The enzyme catalyses L-homoserine + ATP = O-phospho-L-homoserine + ADP + H(+). Its pathway is amino-acid biosynthesis; L-threonine biosynthesis; L-threonine from L-aspartate: step 4/5. Catalyzes the ATP-dependent phosphorylation of L-homoserine to L-homoserine phosphate. This is Homoserine kinase from Synechococcus sp. (strain RCC307).